The sequence spans 719 residues: Acyl-coenzyme A oxidase (719 aa).

Residues 716–719 (APKI) carry the Microbody targeting signal motif.

This sequence belongs to the acyl-CoA oxidase family. FAD serves as cofactor.

It is found in the peroxisome. It carries out the reaction a 2,3-saturated acyl-CoA + O2 = a (2E)-enoyl-CoA + H2O2. The protein operates within lipid metabolism; peroxisomal fatty acid beta-oxidation. This Komagataella pastoris (Yeast) protein is Acyl-coenzyme A oxidase (POX1).